The chain runs to 369 residues: Actin-related protein 2/3 complex subunit 1B-A (369 aa).

7 WD repeats span residues 6-45 (FLLE…WSKI), 50-89 (EHNG…WKPT), 94-135 (RINR…WVCK), 140-179 (PIRS…VEER), 200-239 (SSCG…RVTS), 242-282 (TDTL…LSFG), and 321-364 (LHKN…SAMK).

This sequence belongs to the WD repeat ARPC1 family. In terms of assembly, component of the Arp2/3 complex composed of actr2/arp2, actr3/arp3, arpc1 (arpc1a or arpc1b), arpc2, arpc3, arpc4 and arpc5.

The protein localises to the cytoplasm. It is found in the cytoskeleton. The protein resides in the nucleus. Its function is as follows. Component of the Arp2/3 complex, a multiprotein complex that mediates actin polymerization upon stimulation by nucleation-promoting factor (NPF). The Arp2/3 complex mediates the formation of branched actin networks in the cytoplasm, providing the force for cell motility. In addition to its role in the cytoplasmic cytoskeleton, the Arp2/3 complex also promotes actin polymerization in the nucleus, thereby regulating gene transcription and repair of damaged DNA. The Arp2/3 complex promotes homologous recombination (HR) repair in response to DNA damage by promoting nuclear actin polymerization, leading to drive motility of double-strand breaks (DSBs). This Xenopus laevis (African clawed frog) protein is Actin-related protein 2/3 complex subunit 1B-A (arpc1b-a).